A 975-amino-acid chain; its full sequence is MITEKPSWIRHEGLQIFSIDIQPGGIRFATGGGDQKIRIWSMKSVAKDNDSDDSSQRLLATIRDHFGTVNCVRWAHHGRYLASGSDDQVIQIHERKAGTGTSEFGSGEPPDVENWKVVMTLRGHTADVVDLNWSPDDSTLASGSLDNTVHIWSMANGICTAVLRGHSSLVKGVTWDPIGSFIASQSDDKTVIIWRTSDWSLAHRTEGHWSKSLGSTFFRRLAWSPCGHFITTTHGFQKPRHSAPVLERGEWSATFDFLGHNAPVVVVKFNHSMFRKHLSSGQDAKAAPAGWANGASKASSKEHQPYNVIAIGSQDRTITVWTTASARPLFVAKHFFTQSVVDLSWSPDGYSLFACSLDGSVATFHFEAKELGYRLRDAELDELKKNRYGDVRGRQSNIAESPAQLLLEEASAKQSASKKVSSVQQFQSPPKVSTDAPNPSTSVPNQKAPEALPEDEKKTAGSTADDINKAPRLSSPVKQREYRRPDGRKRIIPEAVGFPSNQDMSNRSQNQGVDFSSLDQRMILGENGTRPSYSASGNCNNCGVRERSGITARTNISESLVIQKASAGAGSDGRLSIEQSGSVVPGSLASCSSLSIHVFNKKDNEDSLPVRLEAKPVERSAGDMIGLGGAFSTKETEITCTRGTETLWSDRISAKVTVLAGNANFWAVGCEDGCLQVYTKCGRRAMPAMMMGSAAVFIDCDECWKLLLVTRRGLMYIWDLYTRTCVLHDSLASLVTSPDEAAGKDTGTVKVISAKFSRCGSPLVVLASRHAFLYDTSLKCWLRIADDCFPASNFASSFSSTQGGELGKLQIDIGKFMARKPIWSRVTDDGVQTRSHLETQLAASLALKSPQEYRQCLLSYIRFLAREADESRLREVCESFLGPPMGMVDAASSADLKNPSWDPDVLGMKKHKLLREDILPSMATNRKVQRLLNEFMDLLSEYEAAETNVEQMDVTPTPPPPPPAAATEGNNNGAS.

WD repeat units follow at residues R10–D50, D64–E103, G123–V162, G165–R204, G214–D256, G259–V331, and F335–R374. Positions K418–S433 are enriched in low complexity. Disordered regions lie at residues K418–N510 and N948–S975. Polar residues predominate over residues D435–N445. The segment covering K478 to I492 has biased composition (basic and acidic residues). Residues P499–N510 are compositionally biased toward polar residues. Residues A923–V954 are a coiled coil.

This sequence belongs to the WD repeat HIR1 family.

It localises to the nucleus. In terms of biological role, histone chaperone involved in maintining knox genes silencing throughout leaf development. In Oryza sativa subsp. japonica (Rice), this protein is Protein HIRA.